A 253-amino-acid polypeptide reads, in one-letter code: 2-C-methyl-D-erythritol 4-phosphate cytidylyltransferase (253 aa).

Belongs to the IspD/TarI cytidylyltransferase family. IspD subfamily.

The catalysed reaction is 2-C-methyl-D-erythritol 4-phosphate + CTP + H(+) = 4-CDP-2-C-methyl-D-erythritol + diphosphate. Its pathway is isoprenoid biosynthesis; isopentenyl diphosphate biosynthesis via DXP pathway; isopentenyl diphosphate from 1-deoxy-D-xylulose 5-phosphate: step 2/6. In terms of biological role, catalyzes the formation of 4-diphosphocytidyl-2-C-methyl-D-erythritol from CTP and 2-C-methyl-D-erythritol 4-phosphate (MEP). This Chlorobium chlorochromatii (strain CaD3) protein is 2-C-methyl-D-erythritol 4-phosphate cytidylyltransferase.